The following is a 215-amino-acid chain: MEIPVDQTEREDITSEKMAQINPLPVHLGPWKITVYDQENFQGKRMEFTSSCANIMECGFDNIRSLKVECGAWIGYEHTSFCGQQFVLERGEYPRWDAWSGSNAYHIERLMSFRPICSANHIESKLVIFEKENFIGRQRELCDDYPSLQAMGWGNNEVGSMKVQCGAWVCYQYPGYRGYQYILESDHHGGEYKHWREWGSHAQTFQIQSIRRIQQ.

Residues 1–30 form an N-terminal arm region; the sequence is MEIPVDQTEREDITSEKMAQINPLPVHLGP. Beta/gamma crystallin 'Greek key' domains are found at residues 31-70 and 71-117; these read WKITVYDQENFQGKRMEFTSSCANIMECGFDNIRSLKVEC and GAWI…RPIC. The segment at 118-123 is connecting peptide; it reads SANHIE. Beta/gamma crystallin 'Greek key' domains are found at residues 124-165 and 166-214; these read SKLV…KVQC and GAWV…RRIQ.

This sequence belongs to the beta/gamma-crystallin family. As to quaternary structure, homo/heterodimer, or complexes of higher-order. The structure of beta-crystallin oligomers seems to be stabilized through interactions between the N-terminal arms. In terms of processing, the N-terminus is blocked.

Its function is as follows. Crystallins are the dominant structural components of the vertebrate eye lens. The sequence is that of Beta-crystallin A3-1 from Aquarana catesbeiana (American bullfrog).